Consider the following 269-residue polypeptide: Putative phosphoenolpyruvate synthase regulatory protein (269 aa).

149–156 (GVSRSGKT) serves as a coordination point for ADP.

Belongs to the pyruvate, phosphate/water dikinase regulatory protein family. PSRP subfamily.

It carries out the reaction [pyruvate, water dikinase] + ADP = [pyruvate, water dikinase]-phosphate + AMP + H(+). It catalyses the reaction [pyruvate, water dikinase]-phosphate + phosphate + H(+) = [pyruvate, water dikinase] + diphosphate. Its function is as follows. Bifunctional serine/threonine kinase and phosphorylase involved in the regulation of the phosphoenolpyruvate synthase (PEPS) by catalyzing its phosphorylation/dephosphorylation. This Pseudoalteromonas translucida (strain TAC 125) protein is Putative phosphoenolpyruvate synthase regulatory protein.